The following is an 880-amino-acid chain: DNA polymerase I (880 aa).

Residues 174-268 (TPEQIIDMKG…SGLEYQGFNR (95 aa)) enclose the 5'-3' exonuclease domain. The 169-residue stretch at 302-470 (DINVKTVTDV…LREKLVQELE (169 aa)) folds into the 3'-5' exonuclease domain.

This sequence belongs to the DNA polymerase type-A family. Single-chain monomer with multiple functions.

It carries out the reaction DNA(n) + a 2'-deoxyribonucleoside 5'-triphosphate = DNA(n+1) + diphosphate. In terms of biological role, in addition to polymerase activity, this DNA polymerase exhibits 3'-5' and 5'-3' exonuclease activity. The sequence is that of DNA polymerase I (polA) from Bacillus subtilis (strain 168).